Reading from the N-terminus, the 216-residue chain is Protein shisa-5 (216 aa).

Positions 1–26 (MAAPAPAPRILVLLLLLLPAPEGAQS) are cleaved as a signal peptide. Residues 27 to 93 (ELCMISHGRK…SGFDSDPVAR (67 aa)) lie on the Extracellular side of the membrane. Residues 94–114 (FGTVIAIGVTLFVIAVVTVIV) traverse the membrane as a helical segment. Over 115-216 (CCTCSCCCLY…AYMEPPKAVP (102 aa)) the chain is Cytoplasmic.

It belongs to the shisa family. In terms of assembly, interacts with PDCD6; PDCD6 can stabilize SHISA5.

The protein localises to the endoplasmic reticulum membrane. It is found in the nucleus membrane. In terms of biological role, can induce apoptosis in a caspase-dependent manner and plays a role in p53/TP53-dependent apoptosis. In Bos taurus (Bovine), this protein is Protein shisa-5 (SHISA5).